The chain runs to 601 residues: MLRPWLRQCPRATRSLACPQCHLPRPQTARRALRPLPALSLSHPIRSLQTTTTESPDRIPLRKQLKQDAKAVKARKRQTRENEEASREKWELTVGIEIHAQLNTESKLFSRASTSSTDLPNSNVALFDLAFPGSQPEFQIATLLPALRAALALNCEIQPVSKFDRKHYFYQDQPAGYQITQYYEPFAKNGYVDLFRHDGIAPEDGDTVRIGIKQVQMEQDTAKSQEYPPSTQLLDFNRVSHPLVEIITMPQIHTPATAAACVRKIQSILQSCNAVTTGMELGGLRADVNVSIRQRGDTAGTHQYGGIGGLGQRTEIKNLSSFKAVEDAIIAEKNRQIAVLESGGVVEGETRGWTIGSTETRKLRGKEGEVDYRYMPDPDLPPLYIGADLVAALRTNLPTSSDALIELLAGPEYGLPIEDAKPLVELEDGARLEYYQEVVDLLRALQSDQDPKAQKGLARVAGNWVLXELGGLWAKAEEAWDAARVPAPTLAALIDQLQRKHITGPTAKQVLAMVFAGDERPIPQLLEEENLLLRPLSREEYVTLAEAAISLNPAMVEQIRQKNQLGKLGWFVGQMMRMGEKGRVEAPRADAILRELILDQR.

The transit peptide at 1-55 directs the protein to the mitochondrion; it reads MLRPWLRQCPRATRSLACPQCHLPRPQTARRALRPLPALSLSHPIRSLQTTTTES.

The protein belongs to the GatB/GatE family. GatB subfamily. As to quaternary structure, subunit of the heterotrimeric GatCAB amidotransferase (AdT) complex, composed of A, B and C subunits.

It is found in the mitochondrion. The catalysed reaction is L-glutamyl-tRNA(Gln) + L-glutamine + ATP + H2O = L-glutaminyl-tRNA(Gln) + L-glutamate + ADP + phosphate + H(+). Allows the formation of correctly charged Gln-tRNA(Gln) through the transamidation of misacylated Glu-tRNA(Gln) in the mitochondria. The reaction takes place in the presence of glutamine and ATP through an activated gamma-phospho-Glu-tRNA(Gln). In Aspergillus niger (strain ATCC MYA-4892 / CBS 513.88 / FGSC A1513), this protein is Glutamyl-tRNA(Gln) amidotransferase subunit B, mitochondrial.